The chain runs to 189 residues: UPF0398 protein LGAS_1023 (189 aa).

It belongs to the UPF0398 family.

The polypeptide is UPF0398 protein LGAS_1023 (Lactobacillus gasseri (strain ATCC 33323 / DSM 20243 / BCRC 14619 / CIP 102991 / JCM 1131 / KCTC 3163 / NCIMB 11718 / NCTC 13722 / AM63)).